The chain runs to 460 residues: tRNA(Ile)-lysidine synthase (460 aa).

ATP is bound at residue 30–35; it reads SGGLDS.

The protein belongs to the tRNA(Ile)-lysidine synthase family.

Its subcellular location is the cytoplasm. The enzyme catalyses cytidine(34) in tRNA(Ile2) + L-lysine + ATP = lysidine(34) in tRNA(Ile2) + AMP + diphosphate + H(+). In terms of biological role, ligates lysine onto the cytidine present at position 34 of the AUA codon-specific tRNA(Ile) that contains the anticodon CAU, in an ATP-dependent manner. Cytidine is converted to lysidine, thus changing the amino acid specificity of the tRNA from methionine to isoleucine. This is tRNA(Ile)-lysidine synthase from Yersinia pestis.